The following is a 180-amino-acid chain: dCTP deaminase, dUMP-forming (180 aa).

DCTP is bound by residues 100-105 (RSSLGR), Asp117, 125-127 (TLE), Gln146, Tyr160, and Gln167. Glu127 serves as the catalytic Proton donor/acceptor.

Belongs to the dCTP deaminase family. Homotrimer.

It carries out the reaction dCTP + 2 H2O = dUMP + NH4(+) + diphosphate. Its pathway is pyrimidine metabolism; dUMP biosynthesis; dUMP from dCTP: step 1/1. Functionally, bifunctional enzyme that catalyzes both the deamination of dCTP to dUTP and the hydrolysis of dUTP to dUMP without releasing the toxic dUTP intermediate. This Sulfurihydrogenibium sp. (strain YO3AOP1) protein is dCTP deaminase, dUMP-forming.